The primary structure comprises 101 residues: Small ribosomal subunit protein uS14 (101 aa).

The protein belongs to the universal ribosomal protein uS14 family. As to quaternary structure, part of the 30S ribosomal subunit. Contacts proteins S3 and S10.

In terms of biological role, binds 16S rRNA, required for the assembly of 30S particles and may also be responsible for determining the conformation of the 16S rRNA at the A site. The sequence is that of Small ribosomal subunit protein uS14 from Actinobacillus pleuropneumoniae serotype 5b (strain L20).